We begin with the raw amino-acid sequence, 211 residues long: Thiamine-phosphate synthase (211 aa).

Residues 37–41 (QLRIK) and Asn-69 contribute to the 4-amino-2-methyl-5-(diphosphooxymethyl)pyrimidine site. 2 residues coordinate Mg(2+): Asp-70 and Asp-89. Ser-108 lines the 4-amino-2-methyl-5-(diphosphooxymethyl)pyrimidine pocket. 134-136 (TQT) provides a ligand contact to 2-[(2R,5Z)-2-carboxy-4-methylthiazol-5(2H)-ylidene]ethyl phosphate. Lys-137 serves as a coordination point for 4-amino-2-methyl-5-(diphosphooxymethyl)pyrimidine. 2-[(2R,5Z)-2-carboxy-4-methylthiazol-5(2H)-ylidene]ethyl phosphate-binding positions include Gly-166 and 186–187 (VS).

This sequence belongs to the thiamine-phosphate synthase family. Requires Mg(2+) as cofactor.

It catalyses the reaction 2-[(2R,5Z)-2-carboxy-4-methylthiazol-5(2H)-ylidene]ethyl phosphate + 4-amino-2-methyl-5-(diphosphooxymethyl)pyrimidine + 2 H(+) = thiamine phosphate + CO2 + diphosphate. The catalysed reaction is 2-(2-carboxy-4-methylthiazol-5-yl)ethyl phosphate + 4-amino-2-methyl-5-(diphosphooxymethyl)pyrimidine + 2 H(+) = thiamine phosphate + CO2 + diphosphate. It carries out the reaction 4-methyl-5-(2-phosphooxyethyl)-thiazole + 4-amino-2-methyl-5-(diphosphooxymethyl)pyrimidine + H(+) = thiamine phosphate + diphosphate. Its pathway is cofactor biosynthesis; thiamine diphosphate biosynthesis; thiamine phosphate from 4-amino-2-methyl-5-diphosphomethylpyrimidine and 4-methyl-5-(2-phosphoethyl)-thiazole: step 1/1. Its function is as follows. Condenses 4-methyl-5-(beta-hydroxyethyl)thiazole monophosphate (THZ-P) and 2-methyl-4-amino-5-hydroxymethyl pyrimidine pyrophosphate (HMP-PP) to form thiamine monophosphate (TMP). In Escherichia coli O139:H28 (strain E24377A / ETEC), this protein is Thiamine-phosphate synthase.